Reading from the N-terminus, the 189-residue chain is Fine tangled pili major subunit (189 aa).

Belongs to the Dps family. Hexamer.

The protein localises to the fimbrium. Functionally, may contribute to bacterial adherence, or be involved in the protection of the bacteria, or both. This is Fine tangled pili major subunit (ftpA) from Haemophilus ducreyi (strain 35000HP / ATCC 700724).